The sequence spans 259 residues: Glucosamine-6-phosphate deaminase (259 aa).

D66 functions as the Proton acceptor; for enolization step in the catalytic mechanism. Residue D135 is the For ring-opening step of the active site. The active-site Proton acceptor; for ring-opening step is H137. The active-site For ring-opening step is the E142.

It belongs to the glucosamine/galactosamine-6-phosphate isomerase family. NagB subfamily.

The catalysed reaction is alpha-D-glucosamine 6-phosphate + H2O = beta-D-fructose 6-phosphate + NH4(+). It participates in amino-sugar metabolism; N-acetylneuraminate degradation; D-fructose 6-phosphate from N-acetylneuraminate: step 5/5. Catalyzes the reversible isomerization-deamination of glucosamine 6-phosphate (GlcN6P) to form fructose 6-phosphate (Fru6P) and ammonium ion. The polypeptide is Glucosamine-6-phosphate deaminase (Rhodococcus opacus (strain B4)).